Here is a 187-residue protein sequence, read N- to C-terminus: Elongation factor P (187 aa).

It belongs to the elongation factor P family.

It is found in the cytoplasm. It functions in the pathway protein biosynthesis; polypeptide chain elongation. Functionally, involved in peptide bond synthesis. Stimulates efficient translation and peptide-bond synthesis on native or reconstituted 70S ribosomes in vitro. Probably functions indirectly by altering the affinity of the ribosome for aminoacyl-tRNA, thus increasing their reactivity as acceptors for peptidyl transferase. The chain is Elongation factor P from Pseudarthrobacter chlorophenolicus (strain ATCC 700700 / DSM 12829 / CIP 107037 / JCM 12360 / KCTC 9906 / NCIMB 13794 / A6) (Arthrobacter chlorophenolicus).